The following is a 179-amino-acid chain: Large ribosomal subunit protein uL6 (179 aa).

It belongs to the universal ribosomal protein uL6 family. In terms of assembly, part of the 50S ribosomal subunit.

Its function is as follows. This protein binds to the 23S rRNA, and is important in its secondary structure. It is located near the subunit interface in the base of the L7/L12 stalk, and near the tRNA binding site of the peptidyltransferase center. The chain is Large ribosomal subunit protein uL6 from Synechocystis sp. (strain ATCC 27184 / PCC 6803 / Kazusa).